The primary structure comprises 471 residues: Transcription initiation factor TFIID subunit 7-like (471 aa).

Disordered regions lie at residues 1-84 (MERG…RQGT), 192-211 (SPEGEPHSPPEEPVVSTGPT), and 328-377 (EMMG…EELE). A Phosphoserine modification is found at serine 199. The span at 347-377 (GDDDDDEDEDDEDYGNEKEEEETDNSEEELE) shows a compositional bias: acidic residues. Positions 358-433 (EDYGNEKEEE…QKELLRKVEN (76 aa)) form a coiled coil.

This sequence belongs to the TAF7 family. TFIID is composed of TATA binding protein (TBP) and a number of TBP-associated factors (TAFs). TAF7L may replace TAF7 in a spermatogenesis-specific form of TFIID. Interacts with TBP; the interaction occurs in a sub-population of cells (pachytene and haploid round spermatids) and is developmentally regulated through differential intracellular localization of the two proteins. Interacts with TAF1. As to expression, testis-specific (at protein level). Expressed during spermatogenesis from spermatogonia stage up to the stage of round spermatids.

The protein localises to the nucleus. It is found in the cytoplasm. Functionally, probably functions as a spermatogenesis-specific component of the DNA-binding general transcription factor complex TFIID, a multimeric protein complex that plays a central role in mediating promoter responses to various activators and repressors. May play a role in spermatogenesis. In Mus musculus (Mouse), this protein is Transcription initiation factor TFIID subunit 7-like (Taf7l).